Reading from the N-terminus, the 321-residue chain is Acetyl-coenzyme A carboxylase carboxyl transferase subunit alpha (321 aa).

The region spanning 39–293 is the CoA carboxyltransferase C-terminal domain; sequence RLQQKSQNLA…RRALGDALRQ (255 aa).

It belongs to the AccA family. In terms of assembly, acetyl-CoA carboxylase is a heterohexamer composed of biotin carboxyl carrier protein (AccB), biotin carboxylase (AccC) and two subunits each of ACCase subunit alpha (AccA) and ACCase subunit beta (AccD).

The protein resides in the cytoplasm. The catalysed reaction is N(6)-carboxybiotinyl-L-lysyl-[protein] + acetyl-CoA = N(6)-biotinyl-L-lysyl-[protein] + malonyl-CoA. The protein operates within lipid metabolism; malonyl-CoA biosynthesis; malonyl-CoA from acetyl-CoA: step 1/1. Its function is as follows. Component of the acetyl coenzyme A carboxylase (ACC) complex. First, biotin carboxylase catalyzes the carboxylation of biotin on its carrier protein (BCCP) and then the CO(2) group is transferred by the carboxyltransferase to acetyl-CoA to form malonyl-CoA. This chain is Acetyl-coenzyme A carboxylase carboxyl transferase subunit alpha, found in Bordetella bronchiseptica (strain ATCC BAA-588 / NCTC 13252 / RB50) (Alcaligenes bronchisepticus).